The primary structure comprises 517 residues: ATP synthase subunit alpha (517 aa).

175–182 contacts ATP; that stretch reads GDRQTGKT.

The protein belongs to the ATPase alpha/beta chains family. In terms of assembly, F-type ATPases have 2 components, CF(1) - the catalytic core - and CF(0) - the membrane proton channel. CF(1) has five subunits: alpha(3), beta(3), gamma(1), delta(1), epsilon(1). CF(0) has three main subunits: a(1), b(2) and c(9-12). The alpha and beta chains form an alternating ring which encloses part of the gamma chain. CF(1) is attached to CF(0) by a central stalk formed by the gamma and epsilon chains, while a peripheral stalk is formed by the delta and b chains.

It localises to the cell membrane. The catalysed reaction is ATP + H2O + 4 H(+)(in) = ADP + phosphate + 5 H(+)(out). In terms of biological role, produces ATP from ADP in the presence of a proton gradient across the membrane. The alpha chain is a regulatory subunit. The chain is ATP synthase subunit alpha from Herpetosiphon aurantiacus (strain ATCC 23779 / DSM 785 / 114-95).